The sequence spans 286 residues: 4-diphosphocytidyl-2-C-methyl-D-erythritol kinase (286 aa).

K10 is a catalytic residue. Residue 100 to 110 (PMGSGLGGGSS) participates in ATP binding. D142 is an active-site residue.

It belongs to the GHMP kinase family. IspE subfamily. Homodimer.

The catalysed reaction is 4-CDP-2-C-methyl-D-erythritol + ATP = 4-CDP-2-C-methyl-D-erythritol 2-phosphate + ADP + H(+). Its pathway is isoprenoid biosynthesis; isopentenyl diphosphate biosynthesis via DXP pathway; isopentenyl diphosphate from 1-deoxy-D-xylulose 5-phosphate: step 3/6. In terms of biological role, catalyzes the phosphorylation of the position 2 hydroxy group of 4-diphosphocytidyl-2C-methyl-D-erythritol. This Buchnera aphidicola subsp. Acyrthosiphon pisum (strain APS) (Acyrthosiphon pisum symbiotic bacterium) protein is 4-diphosphocytidyl-2-C-methyl-D-erythritol kinase.